The chain runs to 798 residues: General transcription and DNA repair factor IIH helicase/translocase subunit XPB (798 aa).

Disordered regions lie at residues 1-62 (MGPP…EQIN) and 235-254 (PPGATDKPTPDPAAAAGADG). Positions 6–22 (KSRKDRSGGDKFGKKRR) match the Nuclear localization signal motif. Residues 10–25 (DRSGGDKFGKKRRAED) show a composition bias toward basic and acidic residues. Acidic residues predominate over residues 33–42 (DDNDSLDATE). One can recognise a Helicase ATP-binding domain in the interval 343–504 (MFGNGRARSG…DLNFLIGPKL (162 aa)). 360-367 (AGKSLVGV) contributes to the ATP binding site. The short motif at 457-460 (DEVH) is the DEVH box element. In terms of domain architecture, Helicase C-terminal spans 558-713 (RSCQFLIKYH…KVITHLKGMD (156 aa)). Positions 746–765 (LPGEPGYRPSGSGGAVRRVG) are disordered.

The protein belongs to the helicase family. RAD25/XPB subfamily. Component of the 7-subunit TFIIH core complex composed of haywire/XPB/ERCC3, XPD/ERCC2, GTF2H1, GTF2H2, GTF2H3, GTF2H4 and GTF2H5, which is active in NER. The core complex associates with the 3-subunit CDK-activating kinase (CAK) module composed of CCNH/cyclin H, CDK7 and MNAT1 to form the 10-subunit holoenzyme (holo-TFIIH) active in transcription. Interacts with PUF60. Interacts with ATF7IP. Interacts with Epstein-Barr virus EBNA2.

It is found in the nucleus. The catalysed reaction is Couples ATP hydrolysis with the unwinding of duplex DNA by translocating in the 3'-5' direction.. It carries out the reaction ATP + H2O = ADP + phosphate + H(+). ATP-dependent 3'-5' DNA helicase/translocase; binds dsDNA rather than ssDNA, unzipping it in a translocase rather than classical helicase activity. Component of the general transcription and DNA repair factor IIH (TFIIH) core complex. When complexed to CDK-activating kinase (CAK), involved in RNA transcription by RNA polymerase II. The ATPase activity of XPB/ERCC3, but not its helicase activity, is required for DNA opening; it may wrap around the damaged DNA wedging it open, causing localized melting and twisting that allows XPD/ERCC2 helicase to anchor. The ATP-dependent helicase activity of XPB/ERCC3 may be required for promoter escape. Also involved in transcription-coupled nucleotide excision repair (NER) of damaged DNA. In NER, TFIIH acts by opening DNA around the lesion to allow the excision of the damaged oligonucleotide and its replacement by a new DNA fragment. The structure of the TFIIH transcription complex differs from the NER-TFIIH complex; large movements by XPD/ERCC2 and XPB/ERCC3 are stabilized by XPA. The protein is General transcription and DNA repair factor IIH helicase/translocase subunit XPB (hay) of Drosophila melanogaster (Fruit fly).